The following is a 529-amino-acid chain: Peptide chain release factor 3 (529 aa).

The region spanning 11-280 (SKRRTFAIIS…GLTDWAPAPL (270 aa)) is the tr-type G domain. GTP-binding positions include 20–27 (SHPDAGKT), 88–92 (DTPGH), and 142–145 (NKLD).

The protein belongs to the TRAFAC class translation factor GTPase superfamily. Classic translation factor GTPase family. PrfC subfamily.

The protein localises to the cytoplasm. Its function is as follows. Increases the formation of ribosomal termination complexes and stimulates activities of RF-1 and RF-2. It binds guanine nucleotides and has strong preference for UGA stop codons. It may interact directly with the ribosome. The stimulation of RF-1 and RF-2 is significantly reduced by GTP and GDP, but not by GMP. The chain is Peptide chain release factor 3 from Vibrio vulnificus (strain YJ016).